The sequence spans 536 residues: Methyl-accepting chemotaxis aspartate transducer (536 aa).

Topologically, residues 1-10 are cytoplasmic; it reads MFNRIRISTS. Residues 11 to 31 traverse the membrane as a helical segment; that stretch reads LFLLLISFCIMQLISTGLSYV. The Periplasmic segment spans residues 32-188; it reads ALRADNHNLE…ASSQQAYGWS (157 aa). The interval 64–73 is the 3 Arg may form a positively charged pocket, which binds the alpha-carboxyl group of the attractant AA; that stretch reads RNTLNRAGTR. The chain crosses the membrane as a helical span at residues 189–209; the sequence is IWLVAGAVLMLLVVTLSAMWW. Residues 210 to 536 are Cytoplasmic-facing; that stretch reads LRTMLVQPLN…VKETLDCQTA (327 aa). The HAMP domain occupies 212-264; it reads TMLVQPLNIIRGHFERIASGDLSAPIEVYGRNEISQLFASLQRMQQSLIGTVG. The 230-residue stretch at 269–498 folds into the Methyl-accepting transducer domain; that stretch reads GAESILIGLQ…ESASAAAALE (230 aa). Q293 bears the Glutamate methyl ester (Gln) mark. E300 is modified (glutamate methyl ester (Glu)). Position 307 is a glutamate methyl ester (Gln) (Q307). E489 and E498 each carry glutamate methyl ester (Glu).

It belongs to the methyl-accepting chemotaxis (MCP) protein family.

It localises to the cell inner membrane. Its function is as follows. This protein responds to changes in Asp concentration in the environment, transduces a signal from the outside to the inside of the cell, and facilitates sensory adaptation through various levels of methylation. Chemotactic-signal transducers respond to changes in the concentration of attractants and repellents in the environment, transduce a signal from the outside to the inside of the cell, and facilitate sensory adaptation through the variation of the level of methylation. Attractants increase the level of methylation while repellents decrease the level of methylation, the methyl groups are added by the methyltransferase CheR and removed by the methylesterase CheB. The chain is Methyl-accepting chemotaxis aspartate transducer (tas) from Klebsiella aerogenes (strain ATCC 13048 / DSM 30053 / CCUG 1429 / JCM 1235 / KCTC 2190 / NBRC 13534 / NCIMB 10102 / NCTC 10006 / CDC 819-56) (Enterobacter aerogenes).